The chain runs to 210 residues: ATP phosphoribosyltransferase (210 aa).

The protein belongs to the ATP phosphoribosyltransferase family. Short subfamily. In terms of assembly, heteromultimer composed of HisG and HisZ subunits.

Its subcellular location is the cytoplasm. The catalysed reaction is 1-(5-phospho-beta-D-ribosyl)-ATP + diphosphate = 5-phospho-alpha-D-ribose 1-diphosphate + ATP. It participates in amino-acid biosynthesis; L-histidine biosynthesis; L-histidine from 5-phospho-alpha-D-ribose 1-diphosphate: step 1/9. Functionally, catalyzes the condensation of ATP and 5-phosphoribose 1-diphosphate to form N'-(5'-phosphoribosyl)-ATP (PR-ATP). Has a crucial role in the pathway because the rate of histidine biosynthesis seems to be controlled primarily by regulation of HisG enzymatic activity. This is ATP phosphoribosyltransferase from Bacillus cytotoxicus (strain DSM 22905 / CIP 110041 / 391-98 / NVH 391-98).